Reading from the N-terminus, the 273-residue chain is Putative phosphoenolpyruvate synthase regulatory protein (273 aa).

Position 154-161 (154-161) interacts with ADP; it reads GVSRSGKT.

The protein belongs to the pyruvate, phosphate/water dikinase regulatory protein family. PSRP subfamily.

It carries out the reaction [pyruvate, water dikinase] + ADP = [pyruvate, water dikinase]-phosphate + AMP + H(+). The enzyme catalyses [pyruvate, water dikinase]-phosphate + phosphate + H(+) = [pyruvate, water dikinase] + diphosphate. Functionally, bifunctional serine/threonine kinase and phosphorylase involved in the regulation of the phosphoenolpyruvate synthase (PEPS) by catalyzing its phosphorylation/dephosphorylation. The chain is Putative phosphoenolpyruvate synthase regulatory protein from Neisseria gonorrhoeae (strain ATCC 700825 / FA 1090).